The sequence spans 264 residues: MRTLWMALCALSRLWPGAQAGCAEAGRCCPGRDPACFARGWRLDRVYGTCFCDQACRFTGDCCFDYDRACPARPCFVGEWSPWSGCADQCKPTTRVRRRSVQQEPQNGGAPCPPLEERAGCLEYSTPQGQDCGHTYVPAFITTSAFNKERTRQATSPHWSTHTEDAGYCMEFKTESLTPHCALENWPLTRWMQYLREGYTVCVDCQPPAMNSVSLRCSGDGLDSDGNQTLHWQAIGNPRCQGTWKKVRRVDQCSCPAVHSFIFI.

Residues 1–20 form the signal peptide; the sequence is MRTLWMALCALSRLWPGAQA. The region spanning 24–75 is the SMB domain; the sequence is EAGRCCPGRDPACFARGWRLDRVYGTCFCDQACRFTGDCCFDYDRACPARPC. Cystine bridges form between Cys-28–Cys-36, Cys-28–Cys-52, Cys-36–Cys-70, Cys-50–Cys-52, Cys-50–Cys-63, Cys-56–Cys-62, and Cys-63–Cys-70. The TSP type-1 domain occupies 74 to 127; sequence PCFVGEWSPWSGCADQCKPTTRVRRRSVQQEPQNGGAPCPPLEERAGCLEYSTP. N-linked (GlcNAc...) asparagine glycosylation is present at Asn-227.

This sequence belongs to the thrombospondin family. In terms of tissue distribution, detected in aorta extracellular matrix (at protein level).

The protein resides in the secreted. Its subcellular location is the extracellular space. It is found in the extracellular matrix. The sequence is that of Somatomedin-B and thrombospondin type-1 domain-containing protein (SBSPON) from Homo sapiens (Human).